The sequence spans 142 residues: Hemoglobin subunit alpha (142 aa).

The 141-residue stretch at 2-142 (VLSAADKGNV…VSTVLTSKYR (141 aa)) folds into the Globin domain. S4 is modified (phosphoserine). Residues K8 and K12 each carry the N6-succinyllysine modification. At K17 the chain carries N6-acetyllysine; alternate. An N6-succinyllysine; alternate modification is found at K17. Phosphotyrosine is present on Y25. S36 carries the phosphoserine modification. The residue at position 41 (K41) is an N6-succinyllysine. The residue at position 50 (S50) is a Phosphoserine. Position 59 (H59) interacts with O2. H88 contacts heme b. S103 carries the phosphoserine modification. Residue T109 is modified to Phosphothreonine. Position 125 is a phosphoserine (S125). Residues T135 and T138 each carry the phosphothreonine modification. At S139 the chain carries Phosphoserine.

Belongs to the globin family. In terms of assembly, heterotetramer of two alpha chains and two beta chains. In terms of tissue distribution, red blood cells.

Functionally, involved in oxygen transport from the lung to the various peripheral tissues. Hemopressin acts as an antagonist peptide of the cannabinoid receptor CNR1. Hemopressin-binding efficiently blocks cannabinoid receptor CNR1 and subsequent signaling. The chain is Hemoglobin subunit alpha (HBA) from Bos gaurus frontalis (Domestic gayal).